Reading from the N-terminus, the 138-residue chain is Large ribosomal subunit protein bL19 (138 aa).

Belongs to the bacterial ribosomal protein bL19 family.

In terms of biological role, this protein is located at the 30S-50S ribosomal subunit interface and may play a role in the structure and function of the aminoacyl-tRNA binding site. This chain is Large ribosomal subunit protein bL19, found in Rickettsia rickettsii (strain Iowa).